We begin with the raw amino-acid sequence, 93 residues long: Small ribosomal subunit protein uS19 (93 aa).

It belongs to the universal ribosomal protein uS19 family.

Its function is as follows. Protein S19 forms a complex with S13 that binds strongly to the 16S ribosomal RNA. This is Small ribosomal subunit protein uS19 (rpsS) from Mycobacterium leprae (strain TN).